Here is a 191-residue protein sequence, read N- to C-terminus: Holliday junction branch migration complex subunit RuvA (191 aa).

The interval Met-1–Ala-64 is domain I. The segment at Thr-65–His-140 is domain II. The interval His-140 to Pro-142 is flexible linker. The tract at residues Ala-143 to Lys-191 is domain III.

It belongs to the RuvA family. As to quaternary structure, homotetramer. Forms an RuvA(8)-RuvB(12)-Holliday junction (HJ) complex. HJ DNA is sandwiched between 2 RuvA tetramers; dsDNA enters through RuvA and exits via RuvB. An RuvB hexamer assembles on each DNA strand where it exits the tetramer. Each RuvB hexamer is contacted by two RuvA subunits (via domain III) on 2 adjacent RuvB subunits; this complex drives branch migration. In the full resolvosome a probable DNA-RuvA(4)-RuvB(12)-RuvC(2) complex forms which resolves the HJ.

The protein resides in the cytoplasm. Functionally, the RuvA-RuvB-RuvC complex processes Holliday junction (HJ) DNA during genetic recombination and DNA repair, while the RuvA-RuvB complex plays an important role in the rescue of blocked DNA replication forks via replication fork reversal (RFR). RuvA specifically binds to HJ cruciform DNA, conferring on it an open structure. The RuvB hexamer acts as an ATP-dependent pump, pulling dsDNA into and through the RuvAB complex. HJ branch migration allows RuvC to scan DNA until it finds its consensus sequence, where it cleaves and resolves the cruciform DNA. In Verminephrobacter eiseniae (strain EF01-2), this protein is Holliday junction branch migration complex subunit RuvA.